The primary structure comprises 236 residues: MSNQLIYSGKAKDIYETADDGIVLISYKDQVTMLNGAHKEMIEGKGSLNNQISALIFDRLNRVGVSTHFIKQLSETEQLNKRVAIIPLEVVLRNVAAGSFSKRFGVKEGQALDEPIIELYYKNDALDDPFINDEHVSFLKLATDEQIAYIKQETHRINAYLKEWFASVGLTLVDFKLEFGFDKEGMLILADEFSPDNCRLWDNAGRHMDKDVFRRQLGSLTQAYETVLERLRALDQ.

It belongs to the SAICAR synthetase family.

It carries out the reaction 5-amino-1-(5-phospho-D-ribosyl)imidazole-4-carboxylate + L-aspartate + ATP = (2S)-2-[5-amino-1-(5-phospho-beta-D-ribosyl)imidazole-4-carboxamido]succinate + ADP + phosphate + 2 H(+). Its pathway is purine metabolism; IMP biosynthesis via de novo pathway; 5-amino-1-(5-phospho-D-ribosyl)imidazole-4-carboxamide from 5-amino-1-(5-phospho-D-ribosyl)imidazole-4-carboxylate: step 1/2. This is Phosphoribosylaminoimidazole-succinocarboxamide synthase from Streptococcus equi subsp. zooepidemicus (strain MGCS10565).